The primary structure comprises 318 residues: Transaldolase (318 aa).

The active-site Schiff-base intermediate with substrate is Lys132.

It belongs to the transaldolase family. Type 1 subfamily. As to quaternary structure, homodimer.

The protein resides in the cytoplasm. It carries out the reaction D-sedoheptulose 7-phosphate + D-glyceraldehyde 3-phosphate = D-erythrose 4-phosphate + beta-D-fructose 6-phosphate. It participates in carbohydrate degradation; pentose phosphate pathway; D-glyceraldehyde 3-phosphate and beta-D-fructose 6-phosphate from D-ribose 5-phosphate and D-xylulose 5-phosphate (non-oxidative stage): step 2/3. Functionally, transaldolase is important for the balance of metabolites in the pentose-phosphate pathway. This chain is Transaldolase, found in Shewanella baltica (strain OS185).